The sequence spans 110 residues: Minor capsid protein VP2 (110 aa).

This sequence belongs to the vesivirus VP2 protein family. In terms of assembly, homooligomer. The portal-like structure consists in 12 copies of VP2. Interacts with capsid protein VP1.

Its subcellular location is the virion. It localises to the host cytoplasm. Functionally, minor structural protein that forms a portal-like structure at a unique three-fold axis of symmetry, following binding to the host receptor. The channel formed by VP2 may allow the delivery of the viral genome through the host endosomal membrane. The polypeptide is Minor capsid protein VP2 (Otariidae (fur seals &amp; sea lions)).